The sequence spans 853 residues: A-kinase anchor protein 3 (853 aa).

The PKA-RII subunit binding domain stretch occupies residues 124-137 (VSFYANRLTNLVIA). The tract at residues 188–240 (RNAAPDKAPGSGDRVSGSSQSPPNLKYKSTLKIKESTKERQGPDDKPPSKKSF) is disordered. 2 positions are modified to phosphoserine: S205 and S208. Over residues 219–235 (KIKESTKERQGPDDKPP) the composition is skewed to basic and acidic residues. A Phosphoserine modification is found at S403. Residue Y404 is modified to Phosphotyrosine. A phosphoserine mark is found at S635 and S636.

Belongs to the AKAP110 family. As to quaternary structure, interacts with ROPN1 and ROPN1L. Interacts with QRICH2. Post-translationally, phosphorylated by STK33 during sperm flagella assembly. Phosphorylated on tyrosine residues. Testis specific; only expressed in spermatids.

It is found in the cytoplasmic vesicle. The protein resides in the secretory vesicle. Its subcellular location is the acrosome. It localises to the cell projection. The protein localises to the cilium. It is found in the flagellum. In terms of biological role, structural component of sperm fibrous sheath. Required for the formation of the subcellular structure of the sperm flagellum, sperm motility and male fertility. This is A-kinase anchor protein 3 from Homo sapiens (Human).